A 686-amino-acid chain; its full sequence is Rhophilin-2 (686 aa).

An REM-1 domain is found at 26–100 (NPLAQTGRSK…LEGLNISVGV (75 aa)). The segment at 46–66 (QILKAVRMRTGAENLLKVATN) is interaction with Rho. The 392-residue stretch at 111 to 502 (PLIPLGLKET…TDFFQKLGPL (392 aa)) folds into the BRO1 domain. A PDZ domain is found at 515–593 (RGIHFTVEEG…EEVEMKVVSL (79 aa)). Thr655 carries the phosphothreonine modification.

This sequence belongs to the RHPN family. In terms of assembly, interacts with GTP-bound RhoA and RhoB. Interacts with both GTP- and GDP-bound RhoA. Interacts with KRT18.

Its subcellular location is the cytoplasm. It localises to the perinuclear region. Its function is as follows. Binds specifically to GTP-Rho. May function in a Rho pathway to limit stress fiber formation and/or increase the turnover of F-actin structures in the absence of high levels of RhoA activity. In Mus musculus (Mouse), this protein is Rhophilin-2 (Rhpn2).